The primary structure comprises 748 residues: Methylmalonyl-CoA mutase, mitochondrial (748 aa).

Residues 1–30 constitute a mitochondrion transit peptide; sequence MLRAKNQLFLLSPHYLKQLNIPSASRWKRL. Position 48 (Gln-48) interacts with malonyl-CoA. Lys-87 bears the N6-acetyllysine mark. Malonyl-CoA is bound by residues 94–97 and 104–108; these read YPTM and TIRQY. Lys-210 carries the N6-acetyllysine modification. Malonyl-CoA contacts are provided by residues 214–216, Arg-226, Lys-253, His-263, and 302–304; these read TIQ and RLS. Position 333 is an N6-acetyllysine (Lys-333). Lys-341 carries the post-translational modification N6-succinyllysine. Ser-479 bears the Phosphoserine mark. Lys-593 carries the post-translational modification N6-succinyllysine. Lys-600 is modified (N6-acetyllysine). Residues 612–744 form the B12-binding domain; it reads RPRLLVAKMG…DDIEKCLAEK (133 aa). His-625 is a binding site for adenosylcob(III)alamin.

Belongs to the methylmalonyl-CoA mutase family. In terms of assembly, homodimer. Interacts (the apoenzyme form) with MMAA; the interaction is GTP dependent. The cofactor is adenosylcob(III)alamin.

The protein resides in the mitochondrion matrix. Its subcellular location is the mitochondrion. It localises to the cytoplasm. It carries out the reaction (R)-methylmalonyl-CoA = succinyl-CoA. Inhibited by itaconyl-CoA, a metabolite that inactivates the coenzyme B12 cofactor. Its function is as follows. Catalyzes the reversible isomerization of methylmalonyl-CoA (MMCoA) (generated from branched-chain amino acid metabolism and degradation of dietary odd chain fatty acids and cholesterol) to succinyl-CoA (3-carboxypropionyl-CoA), a key intermediate of the tricarboxylic acid cycle. The chain is Methylmalonyl-CoA mutase, mitochondrial (Mmut) from Mus musculus (Mouse).